Here is a 251-residue protein sequence, read N- to C-terminus: Adenosylcobinamide-GDP ribazoletransferase (251 aa).

The next 6 membrane-spanning stretches (helical) occupy residues 29-49 (FAGM…ILAV), 65-85 (SLLI…DGAM), 110-130 (AFGA…LCYL), 136-156 (LLIL…IVRY), 175-195 (AIDL…IARF), and 198-218 (LTVA…TGAW).

The protein belongs to the CobS family. The cofactor is Mg(2+).

It localises to the cell inner membrane. The catalysed reaction is alpha-ribazole + adenosylcob(III)inamide-GDP = adenosylcob(III)alamin + GMP + H(+). It carries out the reaction alpha-ribazole 5'-phosphate + adenosylcob(III)inamide-GDP = adenosylcob(III)alamin 5'-phosphate + GMP + H(+). It functions in the pathway cofactor biosynthesis; adenosylcobalamin biosynthesis; adenosylcobalamin from cob(II)yrinate a,c-diamide: step 7/7. Joins adenosylcobinamide-GDP and alpha-ribazole to generate adenosylcobalamin (Ado-cobalamin). Also synthesizes adenosylcobalamin 5'-phosphate from adenosylcobinamide-GDP and alpha-ribazole 5'-phosphate. The chain is Adenosylcobinamide-GDP ribazoletransferase from Synechococcus elongatus (strain ATCC 33912 / PCC 7942 / FACHB-805) (Anacystis nidulans R2).